Reading from the N-terminus, the 614-residue chain is Fructokinase-like 2, chloroplastic (614 aa).

The N-terminal 44 residues, 1-44, are a transit peptide targeting the chloroplast; sequence MASLSFTQFLSFPRCNADVPCLLQSHGFVKFRGERWNGKQSFSM. 2 disordered regions span residues 47 to 75 and 542 to 592; these read GRRK…KPSK and GYPP…YVMK. Residues 548 to 563 show a composition bias toward acidic residues; that stretch reads DMEEEEDDEEEDEVES. A compositionally biased stretch (basic and acidic residues) spans 571–583; that stretch reads ITEKEYRTSKPYD.

Belongs to the carbohydrate kinase PfkB family. In terms of assembly, interacts with CITRX/TRXz. Binds to FLN1 and PTAC5. Associates with the plastid-encoded RNA polymerase (PEP) complex.

The protein localises to the plastid. The protein resides in the chloroplast. Its function is as follows. Required for proper chloroplast development, most likely through regulating plastid-encoded polymerase (PEP) dependent chloroplast transcription. Acts as a component of the transcriptionally active plastid chromosome that is required for plastid gene expression. The protein is Fructokinase-like 2, chloroplastic of Arabidopsis thaliana (Mouse-ear cress).